Here is a 142-residue protein sequence, read N- to C-terminus: Putative tyrosine phosphatase 123R (142 aa).

A Tyrosine-protein phosphatase domain is found at E2–S137. The Phosphocysteine intermediate role is filled by C81.

This sequence belongs to the protein-tyrosine phosphatase family.

The protein is Putative tyrosine phosphatase 123R of Invertebrate iridescent virus 6 (IIV-6).